The chain runs to 534 residues: Serine/threonine-protein kinase Nek6 (534 aa).

One can recognise a Protein kinase domain in the interval 4-257 (YEVVEQIGRG…AGELLRHPYL (254 aa)). Residues 10–18 (IGRGAYGSA) and Lys-33 each bind ATP. The active-site Proton acceptor is the Asp-129. Disordered stretches follow at residues 278–306 (KSNL…SSEA) and 425–449 (KAHT…SSPK).

Belongs to the protein kinase superfamily. NEK Ser/Thr protein kinase family. NIMA subfamily. As to quaternary structure, interacts with DIS1. Ubiquitinated by the E3 ligase DIS1. Ubiquitination of NEK6 leads to its degradation via the 26S proteasome-dependent pathway. In terms of tissue distribution, expressed in anthers, pistils and leaves.

It is found in the cytoplasm. The catalysed reaction is L-seryl-[protein] + ATP = O-phospho-L-seryl-[protein] + ADP + H(+). It catalyses the reaction L-threonyl-[protein] + ATP = O-phospho-L-threonyl-[protein] + ADP + H(+). In terms of biological role, may be involved in plant development processes. This chain is Serine/threonine-protein kinase Nek6, found in Oryza sativa subsp. japonica (Rice).